Consider the following 134-residue polypeptide: Large ribosomal subunit protein eL32 (134 aa).

Belongs to the eukaryotic ribosomal protein eL32 family.

This Drosophila affinis (Fruit fly) protein is Large ribosomal subunit protein eL32 (RpL32).